The sequence spans 445 residues: 26S proteasome regulatory subunit RPN5 (445 aa).

S2 is modified (N-acetylserine). The PCI domain occupies 233–407 (EYLEVAQYLQ…KIVNFEKPKN (175 aa)).

It belongs to the proteasome subunit p55 family. N-acetylated by NAT1.

Acts as a regulatory subunit of the 26S proteasome which is involved in the ATP-dependent degradation of ubiquitinated proteins. This Saccharomyces cerevisiae (strain ATCC 204508 / S288c) (Baker's yeast) protein is 26S proteasome regulatory subunit RPN5 (RPN5).